We begin with the raw amino-acid sequence, 325 residues long: Chain length determinant protein (325 aa).

Residues 1 to 31 are Cytoplasmic-facing; that stretch reads MRVENNNVSGQNLDPEQIDLIDLLVQLWRGK. Residues 32-52 form a helical membrane-spanning segment; it reads MTIIISVIVAIVLAIGYLVVA. Residues 53–294 lie on the Periplasmic side of the membrane; that stretch reads KEKWTSTAIV…LPIRRDSPKK (242 aa). A helical transmembrane segment spans residues 295-315; it reads AITLILAVLLGGMVGAGIVLG. The Cytoplasmic portion of the chain corresponds to 316 to 325; it reads RNALRNYNAK.

The protein belongs to the WzzB/Cld/Rol family.

Its subcellular location is the cell inner membrane. Its pathway is bacterial outer membrane biogenesis; lipopolysaccharide biosynthesis. In terms of biological role, confers a modal distribution of chain length on the O-antigen component of lipopolysaccharide (LPS). Gives rise to a reduced number of short chain molecules and increases in numbers of longer molecules, with a modal value of 13 (in strain O111/M92) and of 17 (in strain K12). The protein is Chain length determinant protein (wzzB) of Escherichia coli.